The sequence spans 350 residues: Purine-binding protein BAB2_0673 (350 aa).

The first 17 residues, 1 to 17 (MVIATVAGFMLGGAAHA), serve as a signal peptide directing secretion. Adenine contacts are provided by W36, W185, and D211.

It belongs to the BMP lipoprotein family.

Binds adenine and probably also other purines, such as guanine. May play a role in adenine and guanine uptake. May be part of an ABC-type uptake system for adenine and similar ligands. The sequence is that of Purine-binding protein BAB2_0673 from Brucella abortus (strain 2308).